Consider the following 105-residue polypeptide: Class I hydrophobin 1 (105 aa).

The first 17 residues, 1-17, serve as a signal peptide directing secretion; the sequence is MQFTSFAILAISAVASA. 4 disulfides stabilise this stretch: Cys36–Cys85, Cys44–Cys78, Cys45–Cys63, and Cys86–Cys100. N-linked (GlcNAc...) asparagine glycosylation is found at Asn48, Asn67, and Asn97.

This sequence belongs to the fungal hydrophobin family. Self-assembles to form functional amyloid fibrils called rodlets. Self-assembly into fibrillar rodlets occurs spontaneously at hydrophobic:hydrophilic interfaces and the rodlets further associate laterally to form amphipathic monolayers. As to expression, abundant on conidia and aerial structures formed in vitro and emerging from disease lesions on infected tomato plants.

It is found in the secreted. The protein localises to the cell wall. Aerial growth, conidiation, and dispersal of filamentous fungi in the environment rely upon a capability of their secreting small amphipathic proteins called hydrophobins (HPBs) with low sequence identity. Class I can self-assemble into an outermost layer of rodlet bundles on aerial cell surfaces, conferring cellular hydrophobicity that supports fungal growth, development and dispersal; whereas Class II form highly ordered films at water-air interfaces through intermolecular interactions but contribute nothing to the rodlet structure. Hcf-1 is a class I hydrophobin that is not necessary for the development of hyphae or conidia but acts as the main determinant of conidium hydrophobicity and, thus, is required for efficient water-mediated dispersal of conidia. Forms a component of the rodlet layer, but other hydrophobins must also participate in this proces. This Passalora fulva (Tomato leaf mold) protein is Class I hydrophobin 1.